The following is a 426-amino-acid chain: Probable histidine--tRNA ligase (426 aa).

This sequence belongs to the class-II aminoacyl-tRNA synthetase family. In terms of assembly, homodimer.

The protein resides in the cytoplasm. The enzyme catalyses tRNA(His) + L-histidine + ATP = L-histidyl-tRNA(His) + AMP + diphosphate + H(+). In Tropheryma whipplei (strain TW08/27) (Whipple's bacillus), this protein is Probable histidine--tRNA ligase (hisS).